Here is a 321-residue protein sequence, read N- to C-terminus: UPF0026 protein MJ1312 (321 aa).

Residues 11–236 (RRLGKSLGIN…AIFNEIIGKN (226 aa)) enclose the Radical SAM core domain. Cysteine 27, cysteine 31, and cysteine 34 together coordinate [4Fe-4S] cluster.

It belongs to the UPF0026 family. The cofactor is [4Fe-4S] cluster.

The chain is UPF0026 protein MJ1312 from Methanocaldococcus jannaschii (strain ATCC 43067 / DSM 2661 / JAL-1 / JCM 10045 / NBRC 100440) (Methanococcus jannaschii).